Consider the following 182-residue polypeptide: uncharacterized protein (182 aa).

Positions 66–133 (QKRKRREIKV…NLEIETNSDS (68 aa)) form a coiled coil.

This is an uncharacterized protein from Acanthamoeba polyphaga (Amoeba).